Reading from the N-terminus, the 266-residue chain is Protein YABBY 5 (266 aa).

Residues 1–22 (MMSSAPETFSLDHLSQHQQQQP) form a disordered region. The C4-type zinc finger occupies 36–63 (CNFCDTILAVGVPCSSLFKTVTVRCGHC). Positions 119 to 141 (ASPNVSSITSSNSSCANNAPATS) are enriched in low complexity. The segment at 119 to 174 (ASPNVSSITSSNSSCANNAPATSMASAANKATQREPQQPKNAPSANRTSEKRQRVP) is disordered. Positions 142-165 (MASAANKATQREPQQPKNAPSANR) are enriched in polar residues.

Belongs to the YABBY family.

The protein localises to the nucleus. Its function is as follows. May be involved in leaf cell growth and differentiation, rather than abaxial cell fate determination. This Oryza sativa subsp. indica (Rice) protein is Protein YABBY 5 (YAB5).